Reading from the N-terminus, the 303-residue chain is Ribosomal protein uL3 glutamine methyltransferase (303 aa).

This sequence belongs to the protein N5-glutamine methyltransferase family. PrmB subfamily.

The catalysed reaction is L-glutaminyl-[ribosomal protein uL3] + S-adenosyl-L-methionine = N(5)-methyl-L-glutaminyl-[ribosomal protein uL3] + S-adenosyl-L-homocysteine + H(+). Functionally, methylates large ribosomal subunit protein uL3 on a specific glutamine residue. The protein is Ribosomal protein uL3 glutamine methyltransferase of Neisseria meningitidis serogroup A / serotype 4A (strain DSM 15465 / Z2491).